The sequence spans 519 residues: Probable cytosol aminopeptidase (519 aa).

Mn(2+) contacts are provided by lysine 251 and aspartate 256. The active site involves lysine 263. Mn(2+) is bound by residues aspartate 274, aspartate 333, and glutamate 335. Arginine 337 is a catalytic residue. A compositionally biased stretch (low complexity) spans 487–502; that stretch reads VAPAAPAAPAAPAARP. The segment at 487–519 is disordered; sequence VAPAAPAAPAAPAARPAAKRTGRSQGGLKRTAP.

Belongs to the peptidase M17 family. Mn(2+) is required as a cofactor.

The protein localises to the cytoplasm. The enzyme catalyses Release of an N-terminal amino acid, Xaa-|-Yaa-, in which Xaa is preferably Leu, but may be other amino acids including Pro although not Arg or Lys, and Yaa may be Pro. Amino acid amides and methyl esters are also readily hydrolyzed, but rates on arylamides are exceedingly low.. It carries out the reaction Release of an N-terminal amino acid, preferentially leucine, but not glutamic or aspartic acids.. Functionally, presumably involved in the processing and regular turnover of intracellular proteins. Catalyzes the removal of unsubstituted N-terminal amino acids from various peptides. The protein is Probable cytosol aminopeptidase of Verminephrobacter eiseniae (strain EF01-2).